The primary structure comprises 583 residues: Ankyrin repeat-containing protein NPR4 (583 aa).

ANK repeat units follow at residues 68–97 (HNDT…AAVA), 119–148 (AGET…AEGV), 154–183 (SGYD…LLAK), 188–218 (ANTS…GLVE), 223–252 (NGKN…QLAR), 257–286 (KGQT…AIVM), and 291–321 (NGNT…HVNA). The next 4 helical transmembrane spans lie at 414-434 (VTVV…TVPG), 452-472 (IFFI…VVQI), 492-512 (LMWL…YIVL), and 518-538 (WAAL…LGTM).

It is found in the cell membrane. In terms of biological role, involved in salt stress tolerance. The chain is Ankyrin repeat-containing protein NPR4 from Oryza sativa subsp. japonica (Rice).